A 288-amino-acid chain; its full sequence is ATP phosphoribosyltransferase (288 aa).

Belongs to the ATP phosphoribosyltransferase family. Long subfamily. The cofactor is Mg(2+).

It localises to the cytoplasm. It catalyses the reaction 1-(5-phospho-beta-D-ribosyl)-ATP + diphosphate = 5-phospho-alpha-D-ribose 1-diphosphate + ATP. Its pathway is amino-acid biosynthesis; L-histidine biosynthesis; L-histidine from 5-phospho-alpha-D-ribose 1-diphosphate: step 1/9. With respect to regulation, feedback inhibited by histidine. In terms of biological role, catalyzes the condensation of ATP and 5-phosphoribose 1-diphosphate to form N'-(5'-phosphoribosyl)-ATP (PR-ATP). Has a crucial role in the pathway because the rate of histidine biosynthesis seems to be controlled primarily by regulation of HisG enzymatic activity. The chain is ATP phosphoribosyltransferase from Methanococcus maripaludis (strain DSM 14266 / JCM 13030 / NBRC 101832 / S2 / LL).